The following is a 240-amino-acid chain: 4-hydroxy-tetrahydrodipicolinate reductase (240 aa).

Residues Ala-79–Thr-81 and Ser-103–Met-106 contribute to the NAD(+) site. Catalysis depends on His-135, which acts as the Proton donor/acceptor. His-136 serves as a coordination point for (S)-2,3,4,5-tetrahydrodipicolinate. The active-site Proton donor is Lys-139. Gly-145–Thr-146 contributes to the (S)-2,3,4,5-tetrahydrodipicolinate binding site.

It belongs to the DapB family.

Its subcellular location is the cytoplasm. The enzyme catalyses (S)-2,3,4,5-tetrahydrodipicolinate + NAD(+) + H2O = (2S,4S)-4-hydroxy-2,3,4,5-tetrahydrodipicolinate + NADH + H(+). It catalyses the reaction (S)-2,3,4,5-tetrahydrodipicolinate + NADP(+) + H2O = (2S,4S)-4-hydroxy-2,3,4,5-tetrahydrodipicolinate + NADPH + H(+). Its pathway is amino-acid biosynthesis; L-lysine biosynthesis via DAP pathway; (S)-tetrahydrodipicolinate from L-aspartate: step 4/4. Its function is as follows. Catalyzes the conversion of 4-hydroxy-tetrahydrodipicolinate (HTPA) to tetrahydrodipicolinate. The chain is 4-hydroxy-tetrahydrodipicolinate reductase from Staphylococcus aureus (strain MRSA252).